Reading from the N-terminus, the 311-residue chain is MSAVWMDEQVESSARVQNSLKIEREDHKLEKRLCREVGRAIVDFNMIEEGDKVMVCVSGGKDSYAMLDILLKLQKRAPIRFDLIAVNLDQKQPGFPKHVLPDYLGKLDVPFHIENQDTYSIVKRVIPEGKTLCSLCSRLRRGILYRVAGELGATKIALGHHRDDMLQTFFLNMFFAAKLKGMPPKLVSDDGKNIVIRPMAYVPEKDLTRWAQVRDFPIIPCTLCGSQENLQRKQVGNMLREWEKKHSGRLENMFSALQNIVPSHLMDSKRHDFKNIRTTGVADAEGDKAFDAEEFSEPQRPGLSVIDIASR.

The PP-loop motif signature appears at 58 to 63; it reads SGGKDS. [4Fe-4S] cluster contacts are provided by C133, C136, and C224.

This sequence belongs to the TtcA family. Homodimer. Requires Mg(2+) as cofactor. [4Fe-4S] cluster serves as cofactor.

The protein resides in the cytoplasm. It catalyses the reaction cytidine(32) in tRNA + S-sulfanyl-L-cysteinyl-[cysteine desulfurase] + AH2 + ATP = 2-thiocytidine(32) in tRNA + L-cysteinyl-[cysteine desulfurase] + A + AMP + diphosphate + H(+). It functions in the pathway tRNA modification. Its function is as follows. Catalyzes the ATP-dependent 2-thiolation of cytidine in position 32 of tRNA, to form 2-thiocytidine (s(2)C32). The sulfur atoms are provided by the cysteine/cysteine desulfurase (IscS) system. The chain is tRNA-cytidine(32) 2-sulfurtransferase from Polaromonas sp. (strain JS666 / ATCC BAA-500).